The sequence spans 165 residues: Ubiquitin-like protein ISG15 (165 aa).

2 consecutive Ubiquitin-like domains span residues 2–78 (GWDL…VDKC) and 79–157 (DEPL…LRGG). Cysteine 78 carries the post-translational modification S-nitrosocysteine; alternate. The short motif at 152 to 157 (LRLRGG) is the LRLRGG element. The segment at 153-157 (RLRGG) is involved in the ligation of specific target proteins. Glycine 157 participates in a covalent cross-link: Glycyl lysine isopeptide (Gly-Lys) (interchain with K-? in acceptor proteins). Positions 158–165 (GTEPGGRS) are cleaved as a propeptide — removed in mature form.

Homodimer; disulfide-linked. Interacts with, and is conjugated to its targets by UBE1L (E1 enzyme) and UBE2E2 (E2 enzyme). Interacts with NEDD4. Interacts with PARP12; this interaction inhibits PINK1/Parkin-dependent mitophagy. As to quaternary structure, (Microbial infection) Interacts with vaccinia virus protein E3. In terms of assembly, (Microbial infection) Interaction with influenza B NS1 protein inhibits its conjugation. (Microbial infection) Interacts (via C-terminus) with Crimean-Congo hemorrhagic fever virus (CCHFV) RNA-directed RNA polymerase L (via N-terminus); the deISGylase activity of the viral protein interferes with antiviral signaling pathways mediated by NF-kappaB and IRF signalings. As to quaternary structure, (Microbial infection) Interacts with human cytomegalovirus protein UL26; this interaction inhibits global protein ISGylation. Post-translationally, S-nitrosylation decreases its dimerization, thereby increasing the availability as well as the solubility of monomeric ISG15 for its conjugation to cellular proteins. Induced as an inactive, precursor protein that is cleaved by specific proteases to expose the C-terminal diglycine (LRLRGG) motif. This motif is essential not only for its conjugation to substrates but also for its recognition by the relevant processing proteases. In terms of tissue distribution, detected in lymphoid cells, striated and smooth muscle, several epithelia and neurons. Expressed in neutrophils, monocytes and lymphocytes. Enhanced expression seen in pancreatic adenocarcinoma, endometrial cancer, and bladder cancer, as compared to non-cancerous tissue. In bladder cancer, the increase in expression exhibits a striking positive correlation with more advanced stages of the disease.

It is found in the cytoplasm. It localises to the secreted. Functionally, ubiquitin-like protein which plays a key role in the innate immune response to viral infection either via its conjugation to a target protein (ISGylation) or via its action as a free or unconjugated protein. ISGylation involves a cascade of enzymatic reactions involving E1, E2, and E3 enzymes which catalyze the conjugation of ISG15 to a lysine residue in the target protein. Its target proteins include IFIT1, MX1/MxA, PPM1B, UBE2L6, UBA7, CHMP5, CHMP2A, CHMP4B and CHMP6. Isgylation of the viral sensor IFIH1/MDA5 promotes IFIH1/MDA5 oligomerization and triggers activation of innate immunity against a range of viruses, including coronaviruses, flaviviruses and picornaviruses. Can also isgylate: EIF2AK2/PKR which results in its activation, RIGI which inhibits its function in antiviral signaling response, EIF4E2 which enhances its cap structure-binding activity and translation-inhibition activity, UBE2N and UBE2E1 which negatively regulates their activity, IRF3 which inhibits its ubiquitination and degradation and FLNB which prevents its ability to interact with the upstream activators of the JNK cascade thereby inhibiting IFNA-induced JNK signaling. Exhibits antiviral activity towards both DNA and RNA viruses, including influenza A, HIV-1 and Ebola virus. Restricts HIV-1 and ebola virus via disruption of viral budding. Inhibits the ubiquitination of HIV-1 Gag and host TSG101 and disrupts their interaction, thereby preventing assembly and release of virions from infected cells. Inhibits Ebola virus budding mediated by the VP40 protein by disrupting ubiquitin ligase activity of NEDD4 and its ability to ubiquitinate VP40. ISGylates influenza A virus NS1 protein which causes a loss of function of the protein and the inhibition of virus replication. The secreted form of ISG15 can: induce natural killer cell proliferation, act as a chemotactic factor for neutrophils and act as a IFN-gamma-inducing cytokine playing an essential role in antimycobacterial immunity. The secreted form acts through the integrin ITGAL/ITGB2 receptor to initiate activation of SRC family tyrosine kinases including LYN, HCK and FGR which leads to secretion of IFNG and IL10; the interaction is mediated by ITGAL. The protein is Ubiquitin-like protein ISG15 of Homo sapiens (Human).